A 29-amino-acid chain; its full sequence is Cytochrome b6-f complex subunit 8 (29 aa).

The helical transmembrane segment at 3 to 23 (IVSLAWAALMVVFSFSLSLVV) threads the bilayer.

This sequence belongs to the PetN family. As to quaternary structure, the 4 large subunits of the cytochrome b6-f complex are cytochrome b6, subunit IV (17 kDa polypeptide, PetD), cytochrome f and the Rieske protein, while the 4 small subunits are PetG, PetL, PetM and PetN. The complex functions as a dimer.

It is found in the plastid. It localises to the chloroplast thylakoid membrane. Component of the cytochrome b6-f complex, which mediates electron transfer between photosystem II (PSII) and photosystem I (PSI), cyclic electron flow around PSI, and state transitions. In Glycine max (Soybean), this protein is Cytochrome b6-f complex subunit 8.